Consider the following 388-residue polypeptide: S-adenosylmethionine synthase (388 aa).

His17 is an ATP binding site. Residue Asp19 coordinates Mg(2+). Position 45 (Glu45) interacts with K(+). The L-methionine site is built by Glu58 and Gln102. The segment at 102 to 112 (QSADIAQGVDA) is flexible loop. ATP is bound by residues 167–169 (DSK), 232–233 (RF), Asp241, 247–248 (RK), Ala264, and Lys268. Asp241 contributes to the L-methionine binding site. An L-methionine-binding site is contributed by Lys272.

It belongs to the AdoMet synthase family. Homotetramer; dimer of dimers. Requires Mg(2+) as cofactor. K(+) serves as cofactor.

It is found in the cytoplasm. It carries out the reaction L-methionine + ATP + H2O = S-adenosyl-L-methionine + phosphate + diphosphate. The protein operates within amino-acid biosynthesis; S-adenosyl-L-methionine biosynthesis; S-adenosyl-L-methionine from L-methionine: step 1/1. In terms of biological role, catalyzes the formation of S-adenosylmethionine (AdoMet) from methionine and ATP. The overall synthetic reaction is composed of two sequential steps, AdoMet formation and the subsequent tripolyphosphate hydrolysis which occurs prior to release of AdoMet from the enzyme. The protein is S-adenosylmethionine synthase of Paramagnetospirillum magneticum (strain ATCC 700264 / AMB-1) (Magnetospirillum magneticum).